The primary structure comprises 485 residues: Aerolysin-5 (485 aa).

The signal sequence occupies residues 1–23 (MQKLKITGLSLIISGLLMAQRHA). 2 disulfides stabilise this stretch: Cys42/Cys98 and Cys182/Cys187. Residues 68–84 (WQISGLANGWVIMGPVY) form an interaction with host N-linked glycan region. Residues 256 to 288 (YGLSEKVTTKNKFKWPLVGETELSIEIAANQSW) form a part of the transmembrane beta-barrel after proteolytic activation of the toxin and insertion into the host membrane region. The segment at 346 to 355 (RWGGNAWYTH) is interaction with glycans from host GPI-anchor. Positions 446–485 (AADGKAPRALSARRGEQGLRLAIPLECRKSSPGLASATSA) are excised as a propeptide.

This sequence belongs to the aerolysin family. Homodimer in solution; homoheptamer in the host membrane. After binding to GPI-anchored proteins in target membranes and proteolytic removal of the C-terminal propeptide, the protein assembles into a heptameric pre-pore complex. A further conformation change leads to insertion into the host membrane. Post-translationally, proteolytic cleavage and subsequent release of the propeptide trigger a major conformation change, leading to the formation of a heptameric pre-pore that then inserts into the host membrane.

The protein resides in the secreted. The protein localises to the host cell membrane. Functionally, secreted, cytolytic toxin that forms pores in host membranes after proteolytic removal of a C-terminal propeptide, leading to destruction of the membrane permeability barrier and cell death. The pores are formed by transmembrane beta-strands and are approximately 3 nm in diameter. The polypeptide is Aerolysin-5 (ahh5) (Aeromonas hydrophila).